The primary structure comprises 255 residues: Thiazole synthase (255 aa).

Catalysis depends on K95, which acts as the Schiff-base intermediate with DXP. 1-deoxy-D-xylulose 5-phosphate contacts are provided by residues G156, A182–G183, and N204–T205.

It belongs to the ThiG family. In terms of assembly, homotetramer. Forms heterodimers with either ThiH or ThiS.

Its subcellular location is the cytoplasm. It carries out the reaction [ThiS sulfur-carrier protein]-C-terminal-Gly-aminoethanethioate + 2-iminoacetate + 1-deoxy-D-xylulose 5-phosphate = [ThiS sulfur-carrier protein]-C-terminal Gly-Gly + 2-[(2R,5Z)-2-carboxy-4-methylthiazol-5(2H)-ylidene]ethyl phosphate + 2 H2O + H(+). It functions in the pathway cofactor biosynthesis; thiamine diphosphate biosynthesis. Functionally, catalyzes the rearrangement of 1-deoxy-D-xylulose 5-phosphate (DXP) to produce the thiazole phosphate moiety of thiamine. Sulfur is provided by the thiocarboxylate moiety of the carrier protein ThiS. In vitro, sulfur can be provided by H(2)S. This is Thiazole synthase from Photorhabdus laumondii subsp. laumondii (strain DSM 15139 / CIP 105565 / TT01) (Photorhabdus luminescens subsp. laumondii).